The chain runs to 115 residues: UPF0738 protein SH1953 (115 aa).

Belongs to the UPF0738 family.

This Staphylococcus haemolyticus (strain JCSC1435) protein is UPF0738 protein SH1953.